Consider the following 177-residue polypeptide: ATP-dependent protease subunit HslV (177 aa).

T7 is a catalytic residue. Residues A162, C165, and T168 each contribute to the Na(+) site.

Belongs to the peptidase T1B family. HslV subfamily. In terms of assembly, a double ring-shaped homohexamer of HslV is capped on each side by a ring-shaped HslU homohexamer. The assembly of the HslU/HslV complex is dependent on binding of ATP.

It localises to the cytoplasm. The enzyme catalyses ATP-dependent cleavage of peptide bonds with broad specificity.. Allosterically activated by HslU binding. Functionally, protease subunit of a proteasome-like degradation complex believed to be a general protein degrading machinery. This Thioalkalivibrio sulfidiphilus (strain HL-EbGR7) protein is ATP-dependent protease subunit HslV.